The chain runs to 182 residues: Troponin I, fast skeletal muscle (182 aa).

Gly2 is modified (N-acetylglycine). Residues 2–48 (GDEEKRNRAITARRQHLKSVMLQIAATELEKEEGRREAEKQNYLAEH) are involved in binding TNC. A Phosphothreonine; by PHK modification is found at Thr12. Positions 97-117 (NQKLFDLRGKFKRPPLRRVRM) are involved in binding TNC and actin. Ser118 carries the phosphoserine; by PKA modification.

The protein belongs to the troponin I family. As to quaternary structure, binds to actin and tropomyosin.

Functionally, troponin I is the inhibitory subunit of troponin, the thin filament regulatory complex which confers calcium-sensitivity to striated muscle actomyosin ATPase activity. This chain is Troponin I, fast skeletal muscle (TNNI2), found in Oryctolagus cuniculus (Rabbit).